A 335-amino-acid chain; its full sequence is Probable UDP-N-acetylglucosamine pyrophosphorylase (335 aa).

A Substrate binding motif is present at residues 45–48; sequence LSGG. Residues 45-48, lysine 59, glutamine 120, and glycine 145 contribute to the UTP site; that span reads LSGG. Asparagine 146 contributes to the substrate binding site. Residue aspartate 170 coordinates UTP. The Substrate binding signature appears at 218–219; it reads EY. Lysine 278 provides a ligand contact to UTP. Position 308 (lysine 308) interacts with substrate.

The protein belongs to the UDPGP type 1 family.

The protein localises to the cytoplasm. It catalyses the reaction N-acetyl-alpha-D-glucosamine 1-phosphate + UTP + H(+) = UDP-N-acetyl-alpha-D-glucosamine + diphosphate. It functions in the pathway nucleotide-sugar biosynthesis; UDP-N-acetyl-alpha-D-glucosamine biosynthesis; UDP-N-acetyl-alpha-D-glucosamine from N-acetyl-alpha-D-glucosamine 1-phosphate: step 1/1. The chain is Probable UDP-N-acetylglucosamine pyrophosphorylase (UAP1) from Encephalitozoon cuniculi (strain GB-M1) (Microsporidian parasite).